A 278-amino-acid polypeptide reads, in one-letter code: Small ribosomal subunit protein uS3 (278 aa).

Positions 39-107 (LRKAISKKYV…KVQLNIVEIS (69 aa)) constitute a KH type-2 domain. Positions 255-278 (AEIPAEEKPKRVVKKAENITKEEE) are disordered.

The protein belongs to the universal ribosomal protein uS3 family. As to quaternary structure, part of the 30S ribosomal subunit. Forms a tight complex with proteins S10 and S14.

In terms of biological role, binds the lower part of the 30S subunit head. Binds mRNA in the 70S ribosome, positioning it for translation. In Dehalococcoides mccartyi (strain CBDB1), this protein is Small ribosomal subunit protein uS3.